A 1369-amino-acid chain; its full sequence is ATP-dependent RNA helicase DHX29 (1369 aa).

Disordered regions lie at residues 27-75 and 176-226; these read SAEA…TNDS and SQEF…KNME. Phosphoserine is present on residues serine 71, serine 192, and serine 200. A compositionally biased stretch (polar residues) spans 189–201; sequence KFQSPQIQATISP. Residues 208 to 226 show a composition bias toward basic and acidic residues; that stretch reads KTYEEDPKSKPKKEEKNME. Coiled-coil stretches lie at residues 222-256, 283-310, and 492-519; these read EKNM…EEEE, LEKN…LEDH, and IAKL…NSED. A disordered region spans residues 502–526; it reads QQQQQQQHSENKRENSEDPEESWEN. One can recognise a Helicase ATP-binding domain in the interval 582-755; the sequence is VETLKRHRVV…FTHCPILRIS (174 aa). 595–602 contacts ATP; sequence GETGSGKS. The DEAH box motif lies at 702–705; that stretch reads DEVH. Residues 849 to 1026 enclose the Helicase C-terminal domain; the sequence is LILELLAYLD…ELCLHIMKCN (178 aa).

It belongs to the DEAD box helicase family. DEAH subfamily. In terms of assembly, part of the 43S pre-initiation complex (PIC) that contains at least Met-tRNA, EIF1, EIF1A (EIF1AX or EIF1AY), EIF2S1, EIF2S2, EIF2S3, EIF3A, EIF3B, EIF3C, EIF3D, EIF3E, EIF3F, EIF3G, EIF3H, EIF3I, EIF3J, EIF3K, EIF3L, EIF3M, DHX29 and the 40S ribosomal subunit.

It localises to the cytoplasm. The catalysed reaction is ATP + H2O = ADP + phosphate + H(+). Its function is as follows. ATP-binding RNA helicase involved in translation initiation. Part of the 43S pre-initiation complex that is required for efficient initiation on mRNAs of higher eukaryotes with structured 5'-UTRs by promoting efficient NTPase-dependent 48S complex formation. Specifically binds to the 40S ribosome near the mRNA entrance. Does not possess a processive helicase activity. This is ATP-dependent RNA helicase DHX29 from Homo sapiens (Human).